Here is a 498-residue protein sequence, read N- to C-terminus: Protein nucleotidyltransferase YdiU (498 aa).

Residues Gly88, Gly90, Arg91, Lys111, Asp123, Gly124, Arg174, and Arg181 each contribute to the ATP site. Catalysis depends on Asp250, which acts as the Proton acceptor. 2 residues coordinate Mg(2+): Asn251 and Asp260. Asp260 lines the ATP pocket.

This sequence belongs to the SELO family. Mg(2+) is required as a cofactor. It depends on Mn(2+) as a cofactor.

It catalyses the reaction L-seryl-[protein] + ATP = 3-O-(5'-adenylyl)-L-seryl-[protein] + diphosphate. It carries out the reaction L-threonyl-[protein] + ATP = 3-O-(5'-adenylyl)-L-threonyl-[protein] + diphosphate. The enzyme catalyses L-tyrosyl-[protein] + ATP = O-(5'-adenylyl)-L-tyrosyl-[protein] + diphosphate. The catalysed reaction is L-histidyl-[protein] + UTP = N(tele)-(5'-uridylyl)-L-histidyl-[protein] + diphosphate. It catalyses the reaction L-seryl-[protein] + UTP = O-(5'-uridylyl)-L-seryl-[protein] + diphosphate. It carries out the reaction L-tyrosyl-[protein] + UTP = O-(5'-uridylyl)-L-tyrosyl-[protein] + diphosphate. Its function is as follows. Nucleotidyltransferase involved in the post-translational modification of proteins. It can catalyze the addition of adenosine monophosphate (AMP) or uridine monophosphate (UMP) to a protein, resulting in modifications known as AMPylation and UMPylation. The protein is Protein nucleotidyltransferase YdiU of Methylorubrum populi (strain ATCC BAA-705 / NCIMB 13946 / BJ001) (Methylobacterium populi).